Consider the following 511-residue polypeptide: ESX-1 secretion system protein EccD1 (511 aa).

N-acetylserine is present on S2. Residues 2–143 (SAPAVAAGPT…PEFDRTALNR (142 aa)) lie on the Cytoplasmic side of the membrane. A helical transmembrane segment spans residues 144 to 164 (FVGAAIPLLTAPVIGMAMRAW). Residues 165 to 170 (WETGRS) are Periplasmic-facing. The helical transmembrane segment at 171 to 191 (LWWPLAIGILGIAVLVGSFVA) threads the bilayer. Topologically, residues 192 to 202 (NRFYQSGHLAE) are cytoplasmic. The helical transmembrane segment at 203-223 (CLLVTTYLLIATAAALAVPLP) threads the bilayer. At 224–227 (RGVN) the chain is on the periplasmic side. Residues 228 to 248 (SLGAPQVAGAATAVLFLTLMT) traverse the membrane as a helical segment. At 249-257 (RGGPRKRHE) the chain is on the cytoplasmic side. Residues 258–278 (LASFAVITAIAVIAAAAAFGY) form a helical membrane-spanning segment. At 279 to 285 (GYQDWVP) the chain is on the periplasmic side. The helical transmembrane segment at 286-306 (AGGIAFGLFIVTNAAKLTVAV) threads the bilayer. Topologically, residues 307 to 367 (ARIALPPIPV…TERSKLAKQL (61 aa)) are cytoplasmic. The next 2 helical transmembrane spans lie at 368–388 (LIGY…AVVV) and 389–409 (RGHF…VCGF). The Cytoplasmic portion of the chain corresponds to 410–420 (RSRLYAERWCA). The helical transmembrane segment at 421 to 441 (WALLAATVAIPTGLTAKLIIW) threads the bilayer. Over 442–444 (YPH) the chain is Periplasmic. A helical transmembrane segment spans residues 445 to 465 (YAWLLLSVYLTVALVALVVVG). Residues 466-482 (SMAHVRRVSPVVKRTLE) lie on the Cytoplasmic side of the membrane. Residues 483 to 503 (LIDGAMIAAIIPMLLWITGVY) traverse the membrane as a helical segment. Over 504–511 (DTVRNIRF) the chain is Periplasmic.

Belongs to the EccD/Snm4 family. In terms of assembly, possibly a homodimer. Part of the ESX-1 / type VII secretion system (T7SS), which is composed of cytosolic and membrane components. The ESX-1 membrane complex is composed of EccB1, EccCa1, EccCb1, EccD1 and EccE1.

It localises to the cell inner membrane. Functionally, part of the ESX-1 specialized secretion system, which delivers several virulence factors to host cells during infection, including the key virulence factors EsxA (ESAT-6) and EsxB (CFP-10). The sequence is that of ESX-1 secretion system protein EccD1 from Mycobacterium tuberculosis (strain ATCC 25618 / H37Rv).